The chain runs to 132 residues: Cytochrome c' (132 aa).

Residues arginine 10, glutamine 11, aspartate 65, cysteine 122, cysteine 125, and histidine 126 each coordinate heme c.

Binds 1 heme c group covalently per subunit.

In terms of biological role, cytochrome c' is the most widely occurring bacterial c-type cytochrome. Cytochromes c' are high-spin proteins and the heme has no sixth ligand. Their exact function is not known. The sequence is that of Cytochrome c' from Halomonas halodenitrificans (strain ATCC 12084 / NCIMB 8669) (Paracoccus halodenitrificans).